The following is a 477-amino-acid chain: UDP-N-acetylmuramate--L-alanine ligase (477 aa).

Position 122 to 128 (122 to 128 (GTHGKTT)) interacts with ATP.

The protein belongs to the MurCDEF family.

It is found in the cytoplasm. It carries out the reaction UDP-N-acetyl-alpha-D-muramate + L-alanine + ATP = UDP-N-acetyl-alpha-D-muramoyl-L-alanine + ADP + phosphate + H(+). It participates in cell wall biogenesis; peptidoglycan biosynthesis. Functionally, cell wall formation. The polypeptide is UDP-N-acetylmuramate--L-alanine ligase (Xanthomonas campestris pv. campestris (strain 8004)).